Here is a 343-residue protein sequence, read N- to C-terminus: Palmitoyltransferase ZDHHC4 (343 aa).

At 1 to 2 (MD) the chain is on the lumenal side. The chain crosses the membrane as a helical span at residues 3-23 (FLVLFSFYLAFLLICVIMICI). At 24-67 (FTKSQRLKAVVLGGAQVCARVTPQCFQRAVQTLLHQLFHTRHPA) the chain is on the cytoplasmic side. The chain crosses the membrane as a helical span at residues 68 to 88 (FLALHLLLQGLVYAEYTYEVF). Over 89–95 (SYCRELE) the chain is Lumenal. Residues 96 to 116 (FSLPCLLLPYVLLSVNLVFFT) form a helical membrane-spanning segment. Over 117–193 (LTCSTNPGTI…NCIGAWNTGY (77 aa)) the chain is Cytoplasmic. The region spanning 149–199 (SRCSTCDLRKPARSKHCRVCDRCVHRFDHHCVWVNNCIGAWNTGYFLIYLL) is the DHHC domain. Residue C179 is the S-palmitoyl cysteine intermediate of the active site. A helical transmembrane segment spans residues 194–214 (FLIYLLTLTASAATIAILSAA). The Lumenal portion of the chain corresponds to 215–255 (FLLRLVAVSNLYQETYLDDLGRFQAVDTGFLIQHLFLAFPR). Residues 256-276 (IIFLLGFVIVLSLLLAGYLCF) traverse the membrane as a helical segment. The Cytoplasmic portion of the chain corresponds to 277–343 (ALYLAATNQT…ATPSYKKKKR (67 aa)). A Di-lysine motif motif is present at residues 340 to 343 (KKKR).

Belongs to the DHHC palmitoyltransferase family. In terms of assembly, interacts with CPT1A.

The protein localises to the endoplasmic reticulum membrane. It is found in the golgi apparatus membrane. The protein resides in the cell membrane. The enzyme catalyses L-cysteinyl-[protein] + hexadecanoyl-CoA = S-hexadecanoyl-L-cysteinyl-[protein] + CoA. Functionally, palmitoyltransferase that could catalyze the addition of palmitate onto protein substrates including the D(2) dopamine receptor DRD2, GSK3B or MAVS. Mediates GSK3B palmitoylation to prevent its AKT1-mediated phosphorylation leading to activation of the STAT3 signaling pathway. Also catalyzes MAVS palmitoylation which promotes its stabilization and activation by inhibiting 'Lys-48'- but facilitating 'Lys-63'-linked ubiquitination. This Rattus norvegicus (Rat) protein is Palmitoyltransferase ZDHHC4.